Reading from the N-terminus, the 243-residue chain is Proteasome subunit beta (243 aa).

The span at 1–16 shows a compositional bias: polar residues; sequence MRAPQHNSDFSRTVNQ. The tract at residues 1 to 29 is disordered; that stretch reads MRAPQHNSDFSRTVNQLADDPNPYEPEVG. Residues 1–48 constitute a propeptide, removed in mature form; by autocatalysis; sequence MRAPQHNSDFSRTVNQLADDPNPYEPEVGSMPKNEFSRADLDNVNKTG. Thr49 acts as the Nucleophile in catalysis.

Belongs to the peptidase T1B family. As to quaternary structure, the 20S proteasome core is composed of 14 alpha and 14 beta subunits that assemble into four stacked heptameric rings, resulting in a barrel-shaped structure. The two inner rings, each composed of seven catalytic beta subunits, are sandwiched by two outer rings, each composed of seven alpha subunits. The catalytic chamber with the active sites is on the inside of the barrel. Has a gated structure, the ends of the cylinder being occluded by the N-termini of the alpha-subunits. Is capped at one or both ends by the proteasome regulatory ATPase, PAN.

It is found in the cytoplasm. It catalyses the reaction Cleavage of peptide bonds with very broad specificity.. Its activity is regulated as follows. The formation of the proteasomal ATPase PAN-20S proteasome complex, via the docking of the C-termini of PAN into the intersubunit pockets in the alpha-rings, triggers opening of the gate for substrate entry. Interconversion between the open-gate and close-gate conformations leads to a dynamic regulation of the 20S proteasome proteolysis activity. Functionally, component of the proteasome core, a large protease complex with broad specificity involved in protein degradation. The polypeptide is Proteasome subunit beta (Natrialba magadii (strain ATCC 43099 / DSM 3394 / CCM 3739 / CIP 104546 / IAM 13178 / JCM 8861 / NBRC 102185 / NCIMB 2190 / MS3) (Natronobacterium magadii)).